The sequence spans 65 residues: MPKIKTVRGAAKRFKKTGKGGFKHKHANLRHILTKKATKRKRHLRPKAMVSKGDLGLVIACLPYA.

The disordered stretch occupies residues 1–22; sequence MPKIKTVRGAAKRFKKTGKGGF. Basic residues predominate over residues 10 to 22; sequence AAKRFKKTGKGGF.

It belongs to the bacterial ribosomal protein bL35 family.

In Klebsiella pneumoniae (strain 342), this protein is Large ribosomal subunit protein bL35.